Reading from the N-terminus, the 327-residue chain is MSKDIRVLLYYKYVPIENAKEYAAEHLAFCKSIGLKGRILIADEGINGTVSGDYETTQKYMDYVHANPLFSDLWFKIDEENEQAFKKMFVRYKKEIVHLGLEDNDFDNDIDPLVTTGAYLSPKEFKEALLDEDTVVLDTRNDYEYDLGHFRGAIRPDIRNFRELPQWVRDNKEKFMDKRVVVYCTGGVRCEKFSGWMVREGYKDVGQLHGGIATYGKDPEVRGELWDGKMYVFDERIAVDVNHVNPVVVGKDWFDGTPCERYVNCGNPFCNRRILTSEENEHKYVRGCSAECRAHERNRYISENGLTRQEWAERLEAIGETLTPANA.

The region spanning 130-224 (LDEDTVVLDT…YGKDPEVRGE (95 aa)) is the Rhodanese domain. C184 functions as the Cysteine persulfide intermediate in the catalytic mechanism.

The protein belongs to the TrhO family.

It carries out the reaction uridine(34) in tRNA + AH2 + O2 = 5-hydroxyuridine(34) in tRNA + A + H2O. In terms of biological role, catalyzes oxygen-dependent 5-hydroxyuridine (ho5U) modification at position 34 in tRNAs. This chain is tRNA uridine(34) hydroxylase, found in Streptococcus suis (strain 98HAH33).